We begin with the raw amino-acid sequence, 309 residues long: Ecto-ADP-ribosyltransferase 5 (309 aa).

The first 23 residues, 1-23, serve as a signal peptide directing secretion; it reads MILEDLLMVLSCLSLHALWKVRA. Cys-43 and Cys-259 are oxidised to a cystine. One can recognise a TR mART core domain in the interval 63-253; the sequence is ALLRESWEAA…IVTLWSYDQT (191 aa). NAD(+) is bound at residue Tyr-100. A glycan (N-linked (GlcNAc...) asparagine) is linked at Asn-102. The NAD(+) site is built by Arg-161 and Gln-181. The active site involves Arg-161. Ser-184 is an active-site residue. An N-linked (GlcNAc...) asparagine glycan is attached at Asn-197. Residue Ser-215 participates in NAD(+) binding. Glu-222 is an active-site residue.

This sequence belongs to the Arg-specific ADP-ribosyltransferase family. Abundantly expressed in testis. Lower levels in cardiac and skeletal muscle.

The protein resides in the secreted. It localises to the membrane. It carries out the reaction L-arginyl-[protein] + NAD(+) = N(omega)-(ADP-D-ribosyl)-L-arginyl-[protein] + nicotinamide + H(+). In Mus musculus (Mouse), this protein is Ecto-ADP-ribosyltransferase 5 (Art5).